A 403-amino-acid polypeptide reads, in one-letter code: Ribose-phosphate pyrophosphokinase 1, chloroplastic (403 aa).

The transit peptide at 1 to 49 directs the protein to the chloroplast; sequence MASLGLSFPPAAKTPTYLASSSSTFFSNSSLSVRTSQFRSRNSVFACVK. Residues Asp-217, His-219, Asp-228, and Asp-232 each coordinate Mg(2+). Residues 303 to 318 are binding of phosphoribosylpyrophosphate; that stretch reads GKVAIMVDDMIDTAGT.

Belongs to the ribose-phosphate pyrophosphokinase family. Mg(2+) serves as cofactor.

It localises to the plastid. The protein resides in the chloroplast. It carries out the reaction D-ribose 5-phosphate + ATP = 5-phospho-alpha-D-ribose 1-diphosphate + AMP + H(+). This is Ribose-phosphate pyrophosphokinase 1, chloroplastic (PRS1) from Arabidopsis thaliana (Mouse-ear cress).